Reading from the N-terminus, the 165-residue chain is Cathelicidin-7 (165 aa).

Residues Met-1 to Ala-29 form the signal peptide. A propeptide spanning residues Gln-30 to Ser-130 is cleaved from the precursor. Cystine bridges form between Cys-86/Cys-97 and Cys-108/Cys-125. Arg-164 is modified (arginine amide).

Belongs to the cathelicidin family. Expressed in bone marrow myeloid cells, spleen and testis.

It localises to the secreted. Its function is as follows. Exerts a potent antimicrobial activity. The polypeptide is Cathelicidin-7 (CATHL7) (Bos taurus (Bovine)).